A 288-amino-acid chain; its full sequence is Small ribosomal subunit protein uS2 (288 aa).

The interval 255–288 is disordered; the sequence is ANNRDHKNNKNNSTIDNAENLKEENLVGGSNNES.

It belongs to the universal ribosomal protein uS2 family.

The polypeptide is Small ribosomal subunit protein uS2 (Ehrlichia chaffeensis (strain ATCC CRL-10679 / Arkansas)).